Reading from the N-terminus, the 240-residue chain is Manganese transport system ATP-binding protein MntB (240 aa).

Positions 1–233 (MEIQGLTIAY…KIQFAYGDAP (233 aa)) constitute an ABC transporter domain. ATP is bound at residue 33–40 (GPNGAGKS).

The protein belongs to the ABC transporter superfamily.

The protein resides in the cell membrane. Its function is as follows. This protein is probably a component of a manganese permease, a binding protein-dependent, ATP-driven transport system. Probably responsible for energy coupling to the transport system. The polypeptide is Manganese transport system ATP-binding protein MntB (mntB) (Listeria monocytogenes serovar 1/2a (strain ATCC BAA-679 / EGD-e)).